The primary structure comprises 443 residues: Trimethylamine monooxygenase (443 aa).

Aspartate 37, glutamine 39, leucine 45, and tryptophan 46 together coordinate FAD. NADP(+) is bound by residues tryptophan 70 and asparagine 72. FAD contacts are provided by asparagine 72 and valine 125. NADP(+) contacts are provided by tyrosine 170, serine 202, serine 203, serine 205, and arginine 226. Residues glutamine 315 and threonine 318 each coordinate FAD. Arginine 409 contacts NADP(+).

The protein belongs to the FMO family. Requires FAD as cofactor.

The catalysed reaction is trimethylamine + NADPH + O2 = trimethylamine N-oxide + NADP(+) + H2O. In terms of biological role, catalyzes the oxidation of trimethylamine (TMA) to produce trimethylamine N-oxide (TMAO). In vitro, has a broad substrate specificity, oxidizing many nitrogen- and sulfur-containing compounds, including dimethylamine (DMA), dimethylsulfide (DMS) and dimethylsulfoxide (DMSO). The chain is Trimethylamine monooxygenase from Pelagibacter ubique (strain HTCC1002).